The sequence spans 358 residues: Trace amine-associated receptor 7d (358 aa).

Over 1–47 (MRVDDDRFPWDQDSILSRDLLSASSLQLCYENLNRSCVRSPYSPGPR) the chain is Extracellular. N-linked (GlcNAc...) asparagine glycosylation is present at N34. Intrachain disulfides connect C37-C201 and C120-C205. Residues 48 to 68 (LILYAVFGFGAVLAVCGNLMV) traverse the membrane as a helical segment. Residues 69-83 (MTSILHFRQLHSPAN) lie on the Cytoplasmic side of the membrane. The helical transmembrane segment at 84-104 (FLVASLACADFLVGLTVMPFS) threads the bilayer. The Extracellular portion of the chain corresponds to 105-122 (MVRSVEGCWYFGDTYCKL). The chain crosses the membrane as a helical span at residues 123–143 (HTCFDVSFCYCSLFHLCFISV). Over 144–166 (DRYIAVSDPLIYPTRFTASVSGK) the chain is Cytoplasmic. Residues 167-187 (CITFSWLLSIIYGFPLIYTGA) form a helical membrane-spanning segment. The Extracellular segment spans residues 188–212 (SEAGLEDLVSALTCVGGCQIPMNQK). A helical transmembrane segment spans residues 213–233 (FVLINFLLFLVPTLVMMTVYS). The Cytoplasmic portion of the chain corresponds to 234-274 (KIFLIARQQAQNIEKMRKQTARASESYKDRVCKRERKAAKT). A helical transmembrane segment spans residues 275–295 (LGIAVAAFLLSWLPYFIDSII). Over 296-309 (DAFLGFITPTYVYE) the chain is Extracellular. A helical transmembrane segment spans residues 310 to 333 (ILIWIVYYNSSMNPLIYAFFYPWF). Topologically, residues 334 to 358 (RKATKLIVTGKILRENSSTINLFPE) are cytoplasmic.

Belongs to the G-protein coupled receptor 1 family.

It is found in the cell membrane. Its function is as follows. Olfactory receptor specific for N,N-dimethylalkylamines trace amines, such as N,N-dimethylcyclohexylamine. Trace amine compounds are enriched in animal body fluids and act on trace amine-associated receptors (TAARs) to elicit both intraspecific and interspecific innate behaviors. Ligand-binding causes a conformation change that triggers signaling via G(s)-class of G alpha proteins (GNAL or GNAS). This chain is Trace amine-associated receptor 7d, found in Rattus norvegicus (Rat).